A 166-amino-acid polypeptide reads, in one-letter code: Nucleotide-binding protein SUN_0226 (166 aa).

This sequence belongs to the YajQ family.

Functionally, nucleotide-binding protein. The polypeptide is Nucleotide-binding protein SUN_0226 (Sulfurovum sp. (strain NBC37-1)).